Consider the following 229-residue polypeptide: Echinolectin 1 (229 aa).

N94 is a glycosylation site (N-linked (GlcNAc...) asparagine).

It localises to the secreted. The protein is Echinolectin 1 of Echinometra lucunter (Rock-boring urchin).